We begin with the raw amino-acid sequence, 160 residues long: Endoribonuclease YbeY (160 aa).

Residues His125, His129, and His135 each coordinate Zn(2+).

Belongs to the endoribonuclease YbeY family. Zn(2+) serves as cofactor.

The protein localises to the cytoplasm. Single strand-specific metallo-endoribonuclease involved in late-stage 70S ribosome quality control and in maturation of the 3' terminus of the 16S rRNA. The polypeptide is Endoribonuclease YbeY (Dehalococcoides mccartyi (strain ATCC BAA-2100 / JCM 16839 / KCTC 5957 / BAV1)).